A 379-amino-acid chain; its full sequence is Leukocyte elastase inhibitor (379 aa).

The residue at position 1 (M1) is an N-acetylmethionine. An N6-acetyllysine mark is found at K137 and K177. S300 is modified (phosphoserine). Positions 351 to 379 are CARD-binding motif (CBM); it reads NFTADHPFLFFIRHNSSGSILFLGRFSSP.

This sequence belongs to the serpin family. Ov-serpin subfamily. In terms of assembly, monomer. Interacts (via C-terminus) with CASP1; CASP4 (via CARD domain) and CASP5; these interactions regulate the activity of inflammatory caspases. Interacts with PRTN3. Interacts with GZMH. As to expression, in human bone marrow, present in all CD45+ populations. Expression levels are highest in the neutrophil lineage, intermediate in monocytic, and lowest in lymphocytic lineage. Within the neutrophil lineage, expression is highest in promyelocytes.

The protein resides in the secreted. It localises to the cytoplasm. Its subcellular location is the cytolytic granule. The protein localises to the early endosome. Neutrophil serine protease inhibitor that plays an essential role in the regulation of the innate immune response, inflammation and cellular homeostasis. Acts primarily to protect the cell from proteases released in the cytoplasm during stress or infection. These proteases are important in killing microbes but when released from granules, these potent enzymes also destroy host proteins and contribute to mortality. Regulates the activity of the neutrophil proteases elastase, cathepsin G, proteinase-3, chymase, chymotrypsin, and kallikrein-3. Also acts as a potent intracellular inhibitor of GZMH by directly blocking its proteolytic activity. During inflammation, limits the activity of inflammatory caspases CASP1, CASP4 and CASP5 by suppressing their caspase-recruitment domain (CARD) oligomerization and enzymatic activation. When secreted, promotes the proliferation of beta-cells via its protease inhibitory function. The polypeptide is Leukocyte elastase inhibitor (SERPINB1) (Homo sapiens (Human)).